Consider the following 93-residue polypeptide: Integration host factor subunit beta (93 aa).

It belongs to the bacterial histone-like protein family. In terms of assembly, heterodimer of an alpha and a beta chain.

In terms of biological role, this protein is one of the two subunits of integration host factor, a specific DNA-binding protein that functions in genetic recombination as well as in transcriptional and translational control. In Aliivibrio salmonicida (strain LFI1238) (Vibrio salmonicida (strain LFI1238)), this protein is Integration host factor subunit beta.